Here is a 487-residue protein sequence, read N- to C-terminus: UDP-N-acetylmuramate--L-alanine ligase (487 aa).

An ATP-binding site is contributed by 130–136; the sequence is GTHGKTT.

It belongs to the MurCDEF family.

The protein resides in the cytoplasm. It catalyses the reaction UDP-N-acetyl-alpha-D-muramate + L-alanine + ATP = UDP-N-acetyl-alpha-D-muramoyl-L-alanine + ADP + phosphate + H(+). It participates in cell wall biogenesis; peptidoglycan biosynthesis. Its function is as follows. Cell wall formation. The polypeptide is UDP-N-acetylmuramate--L-alanine ligase (Photobacterium profundum (strain SS9)).